The chain runs to 229 residues: UPF0758 protein Ppro_3582 (229 aa).

Residues 1-20 are disordered; that stretch reads MCPGIREWPEDERPREKMLR. The span at 7–19 shows a compositional bias: basic and acidic residues; that stretch reads EWPEDERPREKML. Residues 107 to 229 form the MPN domain; it reads RFTSPRQVFD…YLSFVERGVL (123 aa). 3 residues coordinate Zn(2+): H178, H180, and D191. The short motif at 178–191 is the JAMM motif element; the sequence is HNHPTGDPTPSQED.

Belongs to the UPF0758 family.

This is UPF0758 protein Ppro_3582 from Pelobacter propionicus (strain DSM 2379 / NBRC 103807 / OttBd1).